The primary structure comprises 770 residues: Protein PAT1 homolog 1 (770 aa).

Residues 1–26 (MFRYESLEDCPLDEDEDAFQGLGEED) form a disordered region. The tract at residues 1–84 (MFRYESLEDC…EMDLLGDHEE (84 aa)) is region A; interaction with DDX6/RCK. Residues 1-397 (MFRYESLEDC…HRSSHQDHLR (397 aa)) form an involved in nuclear foci localization region. Residues 7–26 (LEDCPLDEDEDAFQGLGEED) are compositionally biased toward acidic residues. The interval 85-388 (NLAERLSKMV…LNGAGDRGSH (304 aa)) is region N; interaction with decapping machinery. The Nuclear export signal motif lies at 86 to 95 (LAERLSKMVI). Ser-177 is modified (phosphoserine). Position 178 is a phosphothreonine (Thr-178). Residues Ser-179 and Ser-184 each carry the phosphoserine modification. Phosphothreonine is present on Thr-194. Residues Arg-217, Arg-223, and Arg-263 each carry the asymmetric dimethylarginine modification. Residues 223-397 (RYPAPYGERM…HRSSHQDHLR (175 aa)) are involved in RNA-binding. Phosphoserine is present on Ser-278. Arg-284 is modified (asymmetric dimethylarginine). 2 disordered regions span residues 315–344 (FRAF…QNLR) and 360–400 (QHRR…RKDP). Residues 324 to 337 (SATPPPQQHPPGPG) are compositionally biased toward pro residues. Residues 367-380 (QRQQQNRNQHRNLN) are compositionally biased toward low complexity. Arg-385 carries the omega-N-methylarginine modification. Positions 385–400 (RGSHRSSHQDHLRKDP) are enriched in basic and acidic residues. Positions 389–448 (RSSHQDHLRKDPYANLMLQREKDWVSKIQMMQLQSTDPYLDDFYYQNYFEKLEKLSAAEE) are region H. The interval 398–770 (KDPYANLMLQ…TKLQLVQGIR (373 aa)) is involved in nuclear speckle localization. The tract at residues 449 to 770 (IQGDGPKKER…TKLQLVQGIR (322 aa)) is region C.

This sequence belongs to the PAT1 family. In terms of assembly, interacts (via region A) with DDX6/RCK. Interacts (via region H and region C) with LSM1 and LSM4. Interacts (via region N) with DCP1A, DCP2, EDC3, EDC4 and XRN1. Interacts with the CCR4-NOT complex. Interacts with the Lsm-containing SMN-Sm protein complex. Interacts with EIF4ENIF1/4E-T.

The protein localises to the cytoplasm. It is found in the P-body. It localises to the nucleus. Its subcellular location is the PML body. The protein resides in the nucleus speckle. Functionally, RNA-binding protein involved in deadenylation-dependent decapping of mRNAs, leading to the degradation of mRNAs. Acts as a scaffold protein that connects deadenylation and decapping machinery. Required for cytoplasmic mRNA processing body (P-body) assembly. The sequence is that of Protein PAT1 homolog 1 (PATL1) from Pongo abelii (Sumatran orangutan).